A 405-amino-acid chain; its full sequence is Arginine biosynthesis bifunctional protein ArgJ (405 aa).

Residues 1–18 (MTSADKNNPDTSTAQGSS) show a composition bias toward polar residues. The tract at residues 1–21 (MTSADKNNPDTSTAQGSSADL) is disordered. Substrate-binding residues include Thr-167, Lys-189, Thr-200, Glu-281, Asn-400, and Thr-405. The active-site Nucleophile is the Thr-200.

Belongs to the ArgJ family. In terms of assembly, heterotetramer of two alpha and two beta chains.

Its subcellular location is the cytoplasm. The catalysed reaction is N(2)-acetyl-L-ornithine + L-glutamate = N-acetyl-L-glutamate + L-ornithine. It catalyses the reaction L-glutamate + acetyl-CoA = N-acetyl-L-glutamate + CoA + H(+). It participates in amino-acid biosynthesis; L-arginine biosynthesis; L-ornithine and N-acetyl-L-glutamate from L-glutamate and N(2)-acetyl-L-ornithine (cyclic): step 1/1. It functions in the pathway amino-acid biosynthesis; L-arginine biosynthesis; N(2)-acetyl-L-ornithine from L-glutamate: step 1/4. In terms of biological role, catalyzes two activities which are involved in the cyclic version of arginine biosynthesis: the synthesis of N-acetylglutamate from glutamate and acetyl-CoA as the acetyl donor, and of ornithine by transacetylation between N(2)-acetylornithine and glutamate. The sequence is that of Arginine biosynthesis bifunctional protein ArgJ from Corynebacterium jeikeium (strain K411).